Consider the following 110-residue polypeptide: ATP-dependent Clp protease adapter protein ClpS (110 aa).

The protein belongs to the ClpS family. As to quaternary structure, binds to the N-terminal domain of the chaperone ClpA.

Functionally, involved in the modulation of the specificity of the ClpAP-mediated ATP-dependent protein degradation. This chain is ATP-dependent Clp protease adapter protein ClpS, found in Bartonella quintana (strain Toulouse) (Rochalimaea quintana).